The chain runs to 178 residues: Ribonuclease M5 (178 aa).

The Toprim domain occupies 10-94 (DGVIVCEGKT…YVDMNARLKN (85 aa)). Mg(2+) contacts are provided by Glu-16, Asp-62, and Asp-64.

It belongs to the ribonuclease M5 family. Requires Mg(2+) as cofactor.

The protein localises to the cytoplasm. The enzyme catalyses Endonucleolytic cleavage of RNA, removing 21 and 42 nucleotides, respectively, from the 5'- and 3'-termini of a 5S-rRNA precursor.. Its function is as follows. Required for correct processing of both the 5' and 3' ends of 5S rRNA precursor. Cleaves both sides of a double-stranded region yielding mature 5S rRNA in one step. This Mycoplasma genitalium (strain ATCC 33530 / DSM 19775 / NCTC 10195 / G37) (Mycoplasmoides genitalium) protein is Ribonuclease M5 (rnmV).